Here is a 344-residue protein sequence, read N- to C-terminus: MTTLFLLIALFITTILNPTSGESVGVCYGMMGNNLPSQSDTIALFRQNNIRRVRLYDPNQAALNALRNTGIEVIIGVPNTDLRSLTNPSSARSWLQNNVLNYYPAVSFKYIAVGNEVSPSNGGDVVLPAMRNVYDALRGANLQDRIKVSTAIDMTLIGNSFPPSSGEFRGDVRWYIDPVIGFLTSTNSALLANIYPYFSYVDNPRDISLSYALFTSPSVVVWDGSRGYQNLFDALLDVVYSAVERSGGGSLPVVVSESGWPSNGGNAASFDNARAFYTNLASRVRENRGTPKRPGRGVETYLFAMFDENQKSPEIEKNFGLFFPNKQPKFPITFSAARDGTAVE.

The signal sequence occupies residues 1-21 (MTTLFLLIALFITTILNPTSG). Catalysis depends on E116, which acts as the Proton donor. E257 functions as the Nucleophile in the catalytic mechanism.

This sequence belongs to the glycosyl hydrolase 17 family. In terms of assembly, (Microbial infection) Interacts with the 30C02 effector protein (AC G3GD54) of the beet cyst nematode Heterodera schachtii. Interaction with the 30C02 effector protein may potentially suppress beta-1,3-glucanase activity and plant defense.

It is found in the secreted. It carries out the reaction Hydrolysis of (1-&gt;3)-beta-D-glucosidic linkages in (1-&gt;3)-beta-D-glucans.. May be involved in plant defense against cyst nematode pathogens. The sequence is that of Probable glucan endo-1,3-beta-glucosidase At4g16260 from Arabidopsis thaliana (Mouse-ear cress).